We begin with the raw amino-acid sequence, 216 residues long: Phosphoribosylformylglycinamidine synthase subunit PurQ (216 aa).

Residues 2–216 (SIGVIVFPGS…GRRMLEALLG (215 aa)) form the Glutamine amidotransferase type-1 domain. C86 acts as the Nucleophile in catalysis. Active-site residues include H193 and E195.

In terms of assembly, part of the FGAM synthase complex composed of 1 PurL, 1 PurQ and 2 PurS subunits.

The protein resides in the cytoplasm. The catalysed reaction is N(2)-formyl-N(1)-(5-phospho-beta-D-ribosyl)glycinamide + L-glutamine + ATP + H2O = 2-formamido-N(1)-(5-O-phospho-beta-D-ribosyl)acetamidine + L-glutamate + ADP + phosphate + H(+). It catalyses the reaction L-glutamine + H2O = L-glutamate + NH4(+). Its pathway is purine metabolism; IMP biosynthesis via de novo pathway; 5-amino-1-(5-phospho-D-ribosyl)imidazole from N(2)-formyl-N(1)-(5-phospho-D-ribosyl)glycinamide: step 1/2. Its function is as follows. Part of the phosphoribosylformylglycinamidine synthase complex involved in the purines biosynthetic pathway. Catalyzes the ATP-dependent conversion of formylglycinamide ribonucleotide (FGAR) and glutamine to yield formylglycinamidine ribonucleotide (FGAM) and glutamate. The FGAM synthase complex is composed of three subunits. PurQ produces an ammonia molecule by converting glutamine to glutamate. PurL transfers the ammonia molecule to FGAR to form FGAM in an ATP-dependent manner. PurS interacts with PurQ and PurL and is thought to assist in the transfer of the ammonia molecule from PurQ to PurL. This Synechococcus sp. (strain CC9605) protein is Phosphoribosylformylglycinamidine synthase subunit PurQ.